Here is a 157-residue protein sequence, read N- to C-terminus: Crossover junction endodeoxyribonuclease RuvC (157 aa).

Catalysis depends on residues aspartate 7, glutamate 67, and aspartate 140. Aspartate 7, glutamate 67, and aspartate 140 together coordinate Mg(2+).

The protein belongs to the RuvC family. In terms of assembly, homodimer which binds Holliday junction (HJ) DNA. The HJ becomes 2-fold symmetrical on binding to RuvC with unstacked arms; it has a different conformation from HJ DNA in complex with RuvA. In the full resolvosome a probable DNA-RuvA(4)-RuvB(12)-RuvC(2) complex forms which resolves the HJ. The cofactor is Mg(2+).

The protein resides in the cytoplasm. The catalysed reaction is Endonucleolytic cleavage at a junction such as a reciprocal single-stranded crossover between two homologous DNA duplexes (Holliday junction).. The RuvA-RuvB-RuvC complex processes Holliday junction (HJ) DNA during genetic recombination and DNA repair. Endonuclease that resolves HJ intermediates. Cleaves cruciform DNA by making single-stranded nicks across the HJ at symmetrical positions within the homologous arms, yielding a 5'-phosphate and a 3'-hydroxyl group; requires a central core of homology in the junction. The consensus cleavage sequence is 5'-(A/T)TT(C/G)-3'. Cleavage occurs on the 3'-side of the TT dinucleotide at the point of strand exchange. HJ branch migration catalyzed by RuvA-RuvB allows RuvC to scan DNA until it finds its consensus sequence, where it cleaves and resolves the cruciform DNA. In Rickettsia prowazekii (strain Madrid E), this protein is Crossover junction endodeoxyribonuclease RuvC.